Consider the following 181-residue polypeptide: Transcriptional repressor NrdR (181 aa).

Residues 3–34 (CPYCQHTDSRVLESRSTGAGRSIRRRRECLSC) fold into a zinc finger. In terms of domain architecture, ATP-cone spans 49-139 (ISVIKRNGQS…VYRQFQGVDD (91 aa)).

The protein belongs to the NrdR family. Zn(2+) serves as cofactor.

Negatively regulates transcription of bacterial ribonucleotide reductase nrd genes and operons by binding to NrdR-boxes. The chain is Transcriptional repressor NrdR from Picosynechococcus sp. (strain ATCC 27264 / PCC 7002 / PR-6) (Agmenellum quadruplicatum).